Consider the following 557-residue polypeptide: CTP synthase (557 aa).

The interval 1 to 272 is amidoligase domain; the sequence is MARSKIVKHI…DSLVLKKLML (272 aa). Position 18 (serine 18) interacts with CTP. Serine 18 lines the UTP pocket. 19–24 contacts ATP; it reads SLGKGI. Tyrosine 59 serves as a coordination point for L-glutamine. Residue aspartate 76 participates in ATP binding. 2 residues coordinate Mg(2+): aspartate 76 and glutamate 146. Residues 153–155, 193–198, and lysine 229 each bind CTP; these read DIE and KTKPTQ. Residues 193 to 198 and lysine 229 contribute to the UTP site; that span reads KTKPTQ. The region spanning 299–543 is the Glutamine amidotransferase type-1 domain; that stretch reads EIGVCGKYTK…VAEAKKFRDE (245 aa). An L-glutamine-binding site is contributed by glycine 363. The Nucleophile; for glutamine hydrolysis role is filled by cysteine 390. Residues 391–394, glutamate 414, and arginine 471 each bind L-glutamine; that span reads LGMQ. Catalysis depends on residues histidine 516 and glutamate 518.

Belongs to the CTP synthase family. As to quaternary structure, homotetramer.

The catalysed reaction is UTP + L-glutamine + ATP + H2O = CTP + L-glutamate + ADP + phosphate + 2 H(+). It carries out the reaction L-glutamine + H2O = L-glutamate + NH4(+). It catalyses the reaction UTP + NH4(+) + ATP = CTP + ADP + phosphate + 2 H(+). It functions in the pathway pyrimidine metabolism; CTP biosynthesis via de novo pathway; CTP from UDP: step 2/2. With respect to regulation, allosterically activated by GTP, when glutamine is the substrate; GTP has no effect on the reaction when ammonia is the substrate. The allosteric effector GTP functions by stabilizing the protein conformation that binds the tetrahedral intermediate(s) formed during glutamine hydrolysis. Inhibited by the product CTP, via allosteric rather than competitive inhibition. Functionally, catalyzes the ATP-dependent amination of UTP to CTP with either L-glutamine or ammonia as the source of nitrogen. Regulates intracellular CTP levels through interactions with the four ribonucleotide triphosphates. This is CTP synthase from Chloroherpeton thalassium (strain ATCC 35110 / GB-78).